The primary structure comprises 244 residues: Small ribosomal subunit protein uS3 (244 aa).

Positions 39–110 (IRDYVRKNLS…QIRINVIEVE (72 aa)) constitute a KH type-2 domain. Residues 215-244 (EDAAPSNVGQPRRRNQQRRRQQFEDRSNEG) form a disordered region. A compositionally biased stretch (basic residues) spans 225-234 (PRRRNQQRRR). Residues 235–244 (QQFEDRSNEG) are compositionally biased toward basic and acidic residues.

This sequence belongs to the universal ribosomal protein uS3 family. In terms of assembly, part of the 30S ribosomal subunit. Forms a tight complex with proteins S10 and S14.

Functionally, binds the lower part of the 30S subunit head. Binds mRNA in the 70S ribosome, positioning it for translation. The chain is Small ribosomal subunit protein uS3 from Synechococcus sp. (strain ATCC 27144 / PCC 6301 / SAUG 1402/1) (Anacystis nidulans).